The chain runs to 141 residues: ATP synthase epsilon chain (141 aa).

The protein belongs to the ATPase epsilon chain family. As to quaternary structure, F-type ATPases have 2 components, CF(1) - the catalytic core - and CF(0) - the membrane proton channel. CF(1) has five subunits: alpha(3), beta(3), gamma(1), delta(1), epsilon(1). CF(0) has three main subunits: a, b and c.

It is found in the cell inner membrane. In terms of biological role, produces ATP from ADP in the presence of a proton gradient across the membrane. This chain is ATP synthase epsilon chain, found in Bordetella petrii (strain ATCC BAA-461 / DSM 12804 / CCUG 43448).